The chain runs to 568 residues: Sulfite reductase [NADPH] hemoprotein beta-component (568 aa).

Cys426, Cys432, Cys471, and Cys475 together coordinate [4Fe-4S] cluster. Residue Cys475 participates in siroheme binding.

Belongs to the nitrite and sulfite reductase 4Fe-4S domain family. As to quaternary structure, alpha(8)-beta(8). The alpha component is a flavoprotein, the beta component is a hemoprotein. It depends on siroheme as a cofactor. [4Fe-4S] cluster serves as cofactor.

The enzyme catalyses hydrogen sulfide + 3 NADP(+) + 3 H2O = sulfite + 3 NADPH + 4 H(+). Its pathway is sulfur metabolism; hydrogen sulfide biosynthesis; hydrogen sulfide from sulfite (NADPH route): step 1/1. Functionally, component of the sulfite reductase complex that catalyzes the 6-electron reduction of sulfite to sulfide. This is one of several activities required for the biosynthesis of L-cysteine from sulfate. This is Sulfite reductase [NADPH] hemoprotein beta-component from Xylella fastidiosa (strain M23).